The sequence spans 159 residues: Cytochrome c-type biogenesis protein CcmE (159 aa).

Topologically, residues 1–7 (MTRKGRR) are cytoplasmic. The chain crosses the membrane as a helical; Signal-anchor for type II membrane protein span at residues 8–28 (LVLIGAGLGVLALAAGLILSA). The Periplasmic segment spans residues 29-159 (LNDTIVFFRS…AAPVQRAPGS (131 aa)). His121 and Tyr125 together coordinate heme. The interval 134–159 (LKKQGRWQEGGPAPGTAAPVQRAPGS) is disordered.

It belongs to the CcmE/CycJ family.

The protein resides in the cell inner membrane. Functionally, heme chaperone required for the biogenesis of c-type cytochromes. Transiently binds heme delivered by CcmC and transfers the heme to apo-cytochromes in a process facilitated by CcmF and CcmH. The chain is Cytochrome c-type biogenesis protein CcmE from Xanthobacter autotrophicus (strain ATCC BAA-1158 / Py2).